Here is a 74-residue protein sequence, read N- to C-terminus: Anaphase-promoting complex subunit 13 (74 aa).

The tract at residues leucine 33–glutamine 53 is disordered.

The protein belongs to the APC13 family. In terms of assembly, the mammalian APC/C is composed at least of 14 distinct subunits ANAPC1, ANAPC2, CDC27/APC3, ANAPC4, ANAPC5, CDC16/APC6, ANAPC7, CDC23/APC8, ANAPC10, ANAPC11, CDC26/APC12, ANAPC13, ANAPC15 and ANAPC16 that assemble into a complex of at least 19 chains with a combined molecular mass of around 1.2 MDa; APC/C interacts with FZR1 and FBXO5.

Its subcellular location is the nucleus. It functions in the pathway protein modification; protein ubiquitination. Functionally, component of the anaphase promoting complex/cyclosome (APC/C), a cell cycle-regulated E3 ubiquitin ligase that controls progression through mitosis and the G1 phase of the cell cycle. The APC/C complex acts by mediating ubiquitination and subsequent degradation of target proteins: it mainly mediates the formation of 'Lys-11'-linked polyubiquitin chains and, to a lower extent, the formation of 'Lys-48'- and 'Lys-63'-linked polyubiquitin chains. The APC/C complex catalyzes assembly of branched 'Lys-11'-/'Lys-48'-linked branched ubiquitin chains on target proteins. In Bos taurus (Bovine), this protein is Anaphase-promoting complex subunit 13 (ANAPC13).